A 213-amino-acid polypeptide reads, in one-letter code: Guanylate kinase (213 aa).

A Guanylate kinase-like domain is found at 12 to 190; sequence GLCLVVAAPS…AIDQVRTILH (179 aa). Residue 19 to 26 participates in ATP binding; the sequence is APSGAGKS.

Belongs to the guanylate kinase family.

The protein resides in the cytoplasm. The catalysed reaction is GMP + ATP = GDP + ADP. Its function is as follows. Essential for recycling GMP and indirectly, cGMP. The protein is Guanylate kinase of Granulibacter bethesdensis (strain ATCC BAA-1260 / CGDNIH1).